A 280-amino-acid polypeptide reads, in one-letter code: Suppressor of disruption of TFIIS (280 aa).

It belongs to the SSM1 family.

Its function is as follows. Could be an enzyme that inactivates 6-azauracil by modifying it. The polypeptide is Suppressor of disruption of TFIIS (SDT1) (Saccharomyces cerevisiae (strain ATCC 204508 / S288c) (Baker's yeast)).